The chain runs to 120 residues: NAD(P)H-quinone oxidoreductase subunit 3, chloroplastic (120 aa).

Transmembrane regions (helical) follow at residues 9–29, 64–84, and 88–108; these read IFWAFLIISSVIPILAFXISG, MFALVFVVFDVETVFLYPWAM, and VLGVSVFIEALIFVLILIVGL.

The protein belongs to the complex I subunit 3 family. In terms of assembly, NDH is composed of at least 16 different subunits, 5 of which are encoded in the nucleus.

The protein localises to the plastid. It is found in the chloroplast thylakoid membrane. It catalyses the reaction a plastoquinone + NADH + (n+1) H(+)(in) = a plastoquinol + NAD(+) + n H(+)(out). It carries out the reaction a plastoquinone + NADPH + (n+1) H(+)(in) = a plastoquinol + NADP(+) + n H(+)(out). Functionally, NDH shuttles electrons from NAD(P)H:plastoquinone, via FMN and iron-sulfur (Fe-S) centers, to quinones in the photosynthetic chain and possibly in a chloroplast respiratory chain. The immediate electron acceptor for the enzyme in this species is believed to be plastoquinone. Couples the redox reaction to proton translocation, and thus conserves the redox energy in a proton gradient. This Eucalyptus globulus subsp. globulus (Tasmanian blue gum) protein is NAD(P)H-quinone oxidoreductase subunit 3, chloroplastic.